Here is a 2629-residue protein sequence, read N- to C-terminus: Telomerase protein component 1 (2629 aa).

TEP1 N-terminal repeat units follow at residues 1-30 (MEKL…DIQP), 31-60 (LEKI…DLQP), 61-90 (MEKI…DLQS), and 91-120 (LEKL…TVKR). One can recognise a TROVE domain in the interval 231 to 689 (LKLTSGDSDS…VKHNLPPLPG (459 aa)). The span at 390–401 (PRKHRSKTRSRQ) shows a compositional bias: basic residues. The interval 390–416 (PRKHRSKTRSRQPPRPQRTKPPFSESG) is disordered. One can recognise an NACHT domain in the interval 1175–1582 (RLSLVIGQAG…KFLTNLHVVA (408 aa)). 1181–1188 (GQAGQGKT) is an ATP binding site. WD repeat units lie at residues 1424 to 1461 (VLPQ…TKSW), 1685 to 1724 (PISS…EEKA), 1727 to 1765 (SGCD…WVFQ), 1768 to 1807 (AHQY…LAFQ), 1809 to 1848 (THPK…VTKE), 1851 to 1890 (GPGP…RLAA), 1893 to 1934 (AQCG…GCLG), 1936 to 1975 (LYLS…QEAQ), 1978 to 2016 (ELNV…LQSL), 2019 to 2058 (SSVC…QPHA), 2070 to 2109 (GHEG…APLL), 2116 to 2154 (CHRD…QLGQ), 2157 to 2194 (GHQS…LTSI), 2200 to 2244 (PISQ…QIHT), 2247 to 2285 (GHSG…DDTC), 2288 to 2327 (RSSA…ATAR), 2329 to 2365 (PGRV…GSTC), 2378 to 2427 (EDLG…SSIL), 2470 to 2510 (PNGS…GEWV), 2555 to 2592 (IHLG…LLGL), and 2594 to 2628 (RCEG…FLSW).

Associated component of the telomerase holoenzyme complex. Component of the vault ribonucleoprotein particle, at least composed of MVP, PARP4 and one or more vault RNAs (vRNAs). Binds to VAULTRC1, VAULTRC2 and VAULTRC4/hvg4 vRNAs.

The protein localises to the nucleus. It is found in the chromosome. The protein resides in the telomere. Its function is as follows. Component of the telomerase ribonucleoprotein complex that is essential for the replication of chromosome termini. Also a component of the ribonucleoprotein vaults particle, a multi-subunit structure involved in nucleo-cytoplasmic transport. Responsible for the localizing and stabilizing vault RNA (vRNA) association in the vault ribonucleoprotein particle. Binds to TERC. In Rattus norvegicus (Rat), this protein is Telomerase protein component 1 (Tep1).